Reading from the N-terminus, the 142-residue chain is Ribosome-binding factor A (142 aa).

Residues Glu120 to Ala130 are compositionally biased toward basic and acidic residues. Positions Glu120 to Gln142 are disordered. Residues Glu131–Gln142 are compositionally biased toward acidic residues.

This sequence belongs to the RbfA family. As to quaternary structure, monomer. Binds 30S ribosomal subunits, but not 50S ribosomal subunits or 70S ribosomes.

The protein resides in the cytoplasm. In terms of biological role, one of several proteins that assist in the late maturation steps of the functional core of the 30S ribosomal subunit. Associates with free 30S ribosomal subunits (but not with 30S subunits that are part of 70S ribosomes or polysomes). Required for efficient processing of 16S rRNA. May interact with the 5'-terminal helix region of 16S rRNA. The protein is Ribosome-binding factor A of Paramagnetospirillum magneticum (strain ATCC 700264 / AMB-1) (Magnetospirillum magneticum).